Consider the following 641-residue polypeptide: Chaperone protein HtpG (641 aa).

Positions 1–351 (MTQSVHAETH…SNDLPLNVSR (351 aa)) are a; substrate-binding. The b stretch occupies residues 352-568 (EILQDNKVTV…AHGMSTQMIK (217 aa)). Residues 569 to 641 (LMRAAGQPVP…SRINRLLLQA (73 aa)) are c.

Belongs to the heat shock protein 90 family. In terms of assembly, homodimer.

It is found in the cytoplasm. In terms of biological role, molecular chaperone. Has ATPase activity. The sequence is that of Chaperone protein HtpG from Aeromonas hydrophila subsp. hydrophila (strain ATCC 7966 / DSM 30187 / BCRC 13018 / CCUG 14551 / JCM 1027 / KCTC 2358 / NCIMB 9240 / NCTC 8049).